A 100-amino-acid polypeptide reads, in one-letter code: NAD(P)H-quinone oxidoreductase subunit 4L, chloroplastic (100 aa).

3 consecutive transmembrane segments (helical) span residues 1-21, 29-49, and 63-83; these read MLEH…YGLI, ALMC…TFSN, and IFVT…ALAI.

It belongs to the complex I subunit 4L family. As to quaternary structure, NDH is composed of at least 16 different subunits, 5 of which are encoded in the nucleus.

Its subcellular location is the plastid. The protein resides in the chloroplast thylakoid membrane. The enzyme catalyses a plastoquinone + NADH + (n+1) H(+)(in) = a plastoquinol + NAD(+) + n H(+)(out). It carries out the reaction a plastoquinone + NADPH + (n+1) H(+)(in) = a plastoquinol + NADP(+) + n H(+)(out). NDH shuttles electrons from NAD(P)H:plastoquinone, via FMN and iron-sulfur (Fe-S) centers, to quinones in the photosynthetic chain and possibly in a chloroplast respiratory chain. The immediate electron acceptor for the enzyme in this species is believed to be plastoquinone. Couples the redox reaction to proton translocation, and thus conserves the redox energy in a proton gradient. In Cycas taitungensis (Prince sago), this protein is NAD(P)H-quinone oxidoreductase subunit 4L, chloroplastic.